Reading from the N-terminus, the 586-residue chain is Chaperone protein HscA homolog (586 aa).

The protein belongs to the heat shock protein 70 family.

Chaperone involved in the maturation of iron-sulfur cluster-containing proteins. Has a low intrinsic ATPase activity which is markedly stimulated by HscB. This is Chaperone protein HscA homolog from Rickettsia typhi (strain ATCC VR-144 / Wilmington).